Consider the following 334-residue polypeptide: Malate dehydrogenase, cytoplasmic (334 aa).

Residue 11-17 coordinates NAD(+); it reads GAAGQIA. Residues Arg92 and Arg98 each coordinate substrate. NAD(+) contacts are provided by residues Asn105, Gln112, and 129–131; that span reads VGN. Positions 131 and 162 each coordinate substrate. The active-site Proton acceptor is the His187.

This sequence belongs to the LDH/MDH superfamily. MDH type 2 family. As to quaternary structure, homodimer.

The protein localises to the cytoplasm. It localises to the cytosol. It carries out the reaction (S)-malate + NAD(+) = oxaloacetate + NADH + H(+). It catalyses the reaction (S)-2-hydroxyglutarate + NAD(+) = 2-oxoglutarate + NADH + H(+). Catalyzes the reduction of aromatic alpha-keto acids in the presence of NADH. Plays essential roles in the malate-aspartate shuttle and the tricarboxylic acid cycle, important in mitochondrial NADH supply for oxidative phosphorylation. Catalyzes the reduction of 2-oxoglutarate to 2-hydroxyglutarate, leading to elevated reactive oxygen species (ROS). In Xenopus laevis (African clawed frog), this protein is Malate dehydrogenase, cytoplasmic (mdh1).